The primary structure comprises 722 residues: Polyribonucleotide nucleotidyltransferase (722 aa).

2 residues coordinate Mg(2+): Asp-487 and Asp-493. One can recognise a KH domain in the interval Pro-554–Ile-613. In terms of domain architecture, S1 motif spans Gly-623–Lys-691. Residues Thr-697–Glu-722 form a disordered region. Residues Leu-701–Gly-713 show a composition bias toward basic and acidic residues.

Belongs to the polyribonucleotide nucleotidyltransferase family. Mg(2+) is required as a cofactor.

It localises to the cytoplasm. The catalysed reaction is RNA(n+1) + phosphate = RNA(n) + a ribonucleoside 5'-diphosphate. Its function is as follows. Involved in mRNA degradation. Catalyzes the phosphorolysis of single-stranded polyribonucleotides processively in the 3'- to 5'-direction. The protein is Polyribonucleotide nucleotidyltransferase of Rhodopseudomonas palustris (strain TIE-1).